The chain runs to 238 residues: Aspartate/glutamate leucyltransferase (238 aa).

The protein belongs to the R-transferase family. Bpt subfamily.

The protein resides in the cytoplasm. The enzyme catalyses N-terminal L-glutamyl-[protein] + L-leucyl-tRNA(Leu) = N-terminal L-leucyl-L-glutamyl-[protein] + tRNA(Leu) + H(+). It catalyses the reaction N-terminal L-aspartyl-[protein] + L-leucyl-tRNA(Leu) = N-terminal L-leucyl-L-aspartyl-[protein] + tRNA(Leu) + H(+). Its function is as follows. Functions in the N-end rule pathway of protein degradation where it conjugates Leu from its aminoacyl-tRNA to the N-termini of proteins containing an N-terminal aspartate or glutamate. This chain is Aspartate/glutamate leucyltransferase, found in Shewanella sp. (strain MR-4).